The primary structure comprises 108 residues: Phosphoribosyl-ATP pyrophosphatase (108 aa).

Belongs to the PRA-PH family.

It is found in the cytoplasm. The enzyme catalyses 1-(5-phospho-beta-D-ribosyl)-ATP + H2O = 1-(5-phospho-beta-D-ribosyl)-5'-AMP + diphosphate + H(+). It functions in the pathway amino-acid biosynthesis; L-histidine biosynthesis; L-histidine from 5-phospho-alpha-D-ribose 1-diphosphate: step 2/9. This chain is Phosphoribosyl-ATP pyrophosphatase, found in Thiobacillus denitrificans (strain ATCC 25259 / T1).